The primary structure comprises 160 residues: Troponin C, skeletal muscle (160 aa).

Threonine 2 carries the post-translational modification N-acetylthreonine. 4 EF-hand domains span residues 15–50 (EMIA…LGQT), 51–86 (PTKE…QMKE), 91–126 (KSEE…SGEH), and 127–160 (VTDE…EGVQ). Ca(2+) is bound by residues aspartate 28, aspartate 30, aspartate 34, glutamate 39, aspartate 64, aspartate 66, serine 68, threonine 70, glutamate 75, aspartate 104, asparagine 106, aspartate 108, tyrosine 110, glutamate 115, aspartate 140, asparagine 142, aspartate 144, arginine 146, and glutamate 151.

The protein belongs to the troponin C family.

Functionally, troponin is the central regulatory protein of striated muscle contraction. Tn consists of three components: Tn-I which is the inhibitor of actomyosin ATPase, Tn-T which contains the binding site for tropomyosin and Tn-C. The binding of calcium to Tn-C abolishes the inhibitory action of Tn on actin filaments. The protein is Troponin C, skeletal muscle (TNNC2) of Homo sapiens (Human).